The primary structure comprises 146 residues: Acidic phospholipase A2 D (146 aa).

Positions 1 to 21 are cleaved as a signal peptide; that stretch reads MNPAHLLILAAVCVSPLGASS. A propeptide spanning residues 22–27 is cleaved from the precursor; that stretch reads NRPMPL. 7 disulfide bridges follow: Cys-38–Cys-98, Cys-53–Cys-145, Cys-55–Cys-71, Cys-70–Cys-126, Cys-77–Cys-119, Cys-87–Cys-112, and Cys-105–Cys-117. Positions 54, 56, and 58 each coordinate Ca(2+). His-74 is a catalytic residue. Asp-75 provides a ligand contact to Ca(2+). Asp-120 is an active-site residue.

Belongs to the phospholipase A2 family. Group I subfamily. D49 sub-subfamily. Requires Ca(2+) as cofactor. As to expression, expressed by the venom gland.

The protein resides in the secreted. The enzyme catalyses a 1,2-diacyl-sn-glycero-3-phosphocholine + H2O = a 1-acyl-sn-glycero-3-phosphocholine + a fatty acid + H(+). In terms of biological role, PLA2 catalyzes the calcium-dependent hydrolysis of the 2-acyl groups in 3-sn-phosphoglycerides. The protein is Acidic phospholipase A2 D of Naja sputatrix (Malayan spitting cobra).